The primary structure comprises 397 residues: 42.8 kDa protein in whiE locus (397 aa).

The disordered stretch occupies residues 1–22; that stretch reads MTVSPVVATDAPSTDATRTTAT. Over residues 8 to 22 the composition is skewed to low complexity; the sequence is ATDAPSTDATRTTAT. The ABM domain occupies 46–137; sequence VRVVLMLDVH…DTHSLRYSVL (92 aa).

The protein belongs to the SchA/CurD family.

The polypeptide is 42.8 kDa protein in whiE locus (Streptomyces coelicolor (strain ATCC BAA-471 / A3(2) / M145)).